The following is a 460-amino-acid chain: Keratin, type I cytoskeletal 27 (460 aa).

The head stretch occupies residues 1–83 (MSVRFSSASR…GNEHGLLSGN (83 aa)). Positions 84 to 119 (EKVTMQNLNDRLASYLDNVRALEEANADLEQKIKGW) are coil 1A. In terms of domain architecture, IF rod spans 84–399 (EKVTMQNLND…RLIDGEDGSC (316 aa)). A linker 1 region spans residues 120-141 (YEKFGPGSCRGLDHDYSRYFTV). The coil 1B stretch occupies residues 142–233 (IDDLRNQIIS…KNHEEEMKAL (92 aa)). The linker 12 stretch occupies residues 234–256 (QCAAGGNVNVEMNAAPGVDLTVL). The coil 2 stretch occupies residues 257–395 (LNNMRAEYEA…ETYCRLIDGE (139 aa)). Positions 396–460 (DGSCAKSKGY…NVKSEQRVPS (65 aa)) are tail. The interval 435 to 460 (LSSRVHSVEEKSTKVNNVKSEQRVPS) is disordered. The segment covering 448-460 (KVNNVKSEQRVPS) has biased composition (polar residues).

Belongs to the intermediate filament family. As to quaternary structure, heterotetramer of two type I and two type II keratins. Interacts with KRT6A to form filaments.

The protein resides in the cytoplasm. Its function is as follows. Essential for the proper assembly of type I and type II keratin protein complexes and formation of keratin intermediate filaments in the inner root sheath (irs). The chain is Keratin, type I cytoskeletal 27 from Bos taurus (Bovine).